The following is a 702-amino-acid chain: MLNSTGELEFSNEEDAEIISQLTSLALSDGKSSAGAPEKTGYPDSVYVMAANIFQGIRIEKSAQKVLIKYGNEPLRSFSESEDQSFQRLSYELAFSALKYQDILETILIDSCIFPSTTIPDRKFQTRVLSDNEESISEVQEVENLLNSFKIKLAAALARCRIKHDALSIYHILPETVRKQELRASTLPLYAWINTCKISPEEVYNNLKRRGYNKVKSVLHIDDKVFAVDQHCYDVLIFPSHLKNDLINIDLFKDYKLIFQDKSRSLAVHSVKALLNMDDDILMVNTGSWYTVAHMSILTNNNTSKVFVCGVQSQAKDPDLKTLFTKMGCKNIEILRETFINIESKDHRLQKVKVILPLPRCSGLGVSNPVEFILNEHEDTEFLKDHSQGGISVDKLHILAQQQYEQLTHAMKFTKAQAVVYCTCSVCPEENEAVVKKALEFQDLGNKVQLYRLSPPVLPLCSLKEIQLSTDKFFRMEPSEITNGCFLSILTRERDPSETVSVKDVLARAAAKGLLDGIELGKSSKREKKKKKSKTSLTKAATTDNGIQMKIAEFLNRETKASANLSETVTKPSLPQKNTAQVGASSQTRKHKLAPHPAVPTFMKNTCPSRPRERQTHFIRPRPEDRMVALKPIEIVLPPVFMPFSSPQGIRSRMPTQHLYCHWVAPKPLVPTCLPTPSLSRKGEKPKDDTRSSLLRPPRRWL.

The active-site Nucleophile is the C424. Disordered regions lie at residues 522–541, 567–593, and 675–702; these read KSSKREKKKKKSKTSLTKAA, ETVTKPSLPQKNTAQVGASSQTRKHKL, and PTPSLSRKGEKPKDDTRSSLLRPPRRWL. Residues 523-534 are compositionally biased toward basic residues; sequence SSKREKKKKKSK. The segment covering 567-587 has biased composition (polar residues); sequence ETVTKPSLPQKNTAQVGASSQ. Residues 681 to 691 are compositionally biased toward basic and acidic residues; that stretch reads RKGEKPKDDTR.

It belongs to the class I-like SAM-binding methyltransferase superfamily. RsmB/NOP family.

Its function is as follows. May have S-adenosyl-L-methionine-dependent methyl-transferase activity. The sequence is that of Putative methyltransferase NSUN7 (NSUN7) from Macaca fascicularis (Crab-eating macaque).